The primary structure comprises 248 residues: Ethylene-responsive transcription factor ERF026 (248 aa).

Residues 89-145 constitute a DNA-binding region (AP2/ERF); that stretch reads VYRGIRCRSGKWVSEIREPKKTTRVWLGTYPTPEMAAAAYDVAALALKGGDTLLNFP. Positions 225 to 248 are disordered; the sequence is PPWMGSPPSDDSPENSDGESLWSY.

This sequence belongs to the AP2/ERF transcription factor family. ERF subfamily.

It is found in the nucleus. Its function is as follows. Probably acts as a transcriptional activator. Binds to the GCC-box pathogenesis-related promoter element. May be involved in the regulation of gene expression by stress factors and by components of stress signal transduction pathways. The protein is Ethylene-responsive transcription factor ERF026 (ERF026) of Arabidopsis thaliana (Mouse-ear cress).